Reading from the N-terminus, the 246-residue chain is Aquaporin AqpM (246 aa).

Residues 1 to 11 (MVSLTKRCIAE) lie on the Cytoplasmic side of the membrane. The helical transmembrane segment at 12 to 32 (FIGTFFLVFFGAGAAAITLMI) threads the bilayer. Residues 33 to 45 (ASGGTAPNPFNIG) lie on the Extracellular side of the membrane. A helical membrane pass occupies residues 46–66 (IGLLGGLGDWVAIGLAFGFAI). At 67–69 (AAS) the chain is on the cytoplasmic side. Residues 70–90 (IYALGNISGCHINPAVTIGLW) form a helical membrane-spanning segment. Residues 82 to 84 (NPA) carry the NPA 1 motif. Over 91–103 (SVKKFPGRDVVPY) the chain is Extracellular. Residues 104–124 (IIAQLLGAAFASFIFLQCAGI) form a helical membrane-spanning segment. Residues 125-145 (TAATIGGLGATAPFPGIGYWQ) lie on the Cytoplasmic side of the membrane. A helical transmembrane segment spans residues 146–166 (AMLAETVGTFLLMITIMGIAV). The Extracellular portion of the chain corresponds to 167-172 (DERAPK). The helical transmembrane segment at 173 to 193 (GFAGIIIGLTVAGIITTIGNI) threads the bilayer. At 194-217 (TGSSLNPARTFGPYLNDMVFAGTN) the chain is on the cytoplasmic side. The NPA 2 signature appears at 199–201 (NPA). Residues 218-238 (LWNYFPIYVIGPVVGAVLAAL) traverse the membrane as a helical segment. The Extracellular segment spans residues 239 to 246 (TYQYLTSE).

Belongs to the MIP/aquaporin (TC 1.A.8) family. Homotetramer.

The protein resides in the cell membrane. In terms of biological role, channel that permits osmotically driven movement of water in both directions. It mediates rapid entry or exit of water in response to abrupt changes in osmolarity. Also exhibits a transient but reproducible increase in the initial glycerol flux. In Methanothermobacter thermautotrophicus (strain ATCC 29096 / DSM 1053 / JCM 10044 / NBRC 100330 / Delta H) (Methanobacterium thermoautotrophicum), this protein is Aquaporin AqpM (aqpM).